A 469-amino-acid chain; its full sequence is E3 ubiquitin-protein ligase TRAIP (469 aa).

The RING-type zinc finger occupies 7 to 50 (CTICSDFFDHSRDVAAIHCGHTFHLQCLIQWFETAPSRTCPQCR). 2 coiled-coil regions span residues 70–177 (EENV…QSQR) and 201–280 (CVSL…TLNL). Residues 211 to 469 (LKEARKASGE…QAKLDTFLWS (259 aa)) are interaction with CYLD. Residue Lys-304 forms a Glycyl lysine isopeptide (Lys-Gly) (interchain with G-Cter in SUMO2) linkage. Residues 460-469 (QAKLDTFLWS) carry the PIP-box motif.

Belongs to the TRAIP family. Interacts (via PIP-box) with PCNA. Binds TRAF1, TRAF2, TRAF3, TRAF5 and TRAF6 is part of the receptor-TRAF signaling complex. May interact with CYLD; the C-terminus interacts with CYLD, however the interaction was not detected with the full-length protein. Interacts with POLK and POLN. Interacts with UIMC1. In terms of processing, sumoylated; sumoylation is required for nuclear localization. Sumoylation increases protein stability, possibly by preventing ubiquitination. Autoubiquitinated.

It is found in the nucleus. Its subcellular location is the nucleoplasm. It localises to the nucleolus. The protein localises to the chromosome. The protein resides in the cytoplasm. It is found in the perinuclear region. It carries out the reaction S-ubiquitinyl-[E2 ubiquitin-conjugating enzyme]-L-cysteine + [acceptor protein]-L-lysine = [E2 ubiquitin-conjugating enzyme]-L-cysteine + N(6)-ubiquitinyl-[acceptor protein]-L-lysine.. Its pathway is protein modification; protein ubiquitination. Its function is as follows. E3 ubiquitin ligase required to protect genome stability in response to replication stress. Acts as a key regulator of interstrand cross-link repair, which takes place when both strands of duplex DNA are covalently tethered together, thereby blocking replication and transcription. Controls the choice between the two pathways of replication-coupled interstrand-cross-link repair by mediating ubiquitination of MCM7 subunit of the CMG helicase complex. Short ubiquitin chains on MCM7 promote recruitment of DNA glycosylase NEIL3. If the interstrand cross-link cannot be cleaved by NEIL3, the ubiquitin chains continue to grow on MCM7, promoting the unloading of the CMG helicase complex by the VCP/p97 ATPase, enabling the Fanconi anemia DNA repair pathway. Only catalyzes ubiquitination of MCM7 when forks converge. Also involved in the repair of covalent DNA-protein cross-links (DPCs) during DNA synthesis: promotes ubiquitination of DPCs, leading to their degradation by the proteasome. Has also been proposed to play a role in promoting translesion synthesis by mediating the assembly of 'Lys-63'-linked poly-ubiquitin chains on the Y-family polymerase POLN in order to facilitate bypass of DNA lesions and preserve genomic integrity. The function in translesion synthesis is however controversial. Acts as a regulator of the spindle assembly checkpoint. Also acts as a negative regulator of innate immune signaling by inhibiting activation of NF-kappa-B mediated by TNF. Negatively regulates TLR3/4- and RIG-I-mediated IRF3 activation and subsequent IFNB1 production and cellular antiviral response by promoting 'Lys-48'-linked polyubiquitination of TNK1 leading to its proteasomal degradation. This Homo sapiens (Human) protein is E3 ubiquitin-protein ligase TRAIP.